The primary structure comprises 147 residues: uncharacterized protein (147 aa).

In terms of domain architecture, HTH marR-type spans 1 to 137 (MRDNTIGSLI…LYELMTKVHK (137 aa)). Residues 53 to 76 (QMELAEKVTVTQGGISRMLTRLEK) constitute a DNA-binding region (H-T-H motif).

This is an uncharacterized protein from Bacillus thuringiensis subsp. konkukian (strain 97-27).